The sequence spans 515 residues: Glucose-6-phosphate 1-dehydrogenase (515 aa).

N-acetylalanine is present on Ala-2. The residue at position 8 (Ser-8) is a Phosphoserine. Phosphothreonine is present on Thr-10. The residue at position 26 (Phe-26) is a Phosphoserine. NADP(+) is bound by residues 38–45 and Arg-72; that span reads GASGDLAK. Residue Lys-89 is modified to N6-acetyllysine. Residues Tyr-147 and Lys-171 each coordinate NADP(+). D-glucose 6-phosphate is bound by residues Lys-171, 201–205, Glu-239, and Asp-258; that span reads HYLGK. Lys-171 is modified (N6-(2-hydroxyisobutyryl)lysine; alternate). Lys-171 is subject to N6-acetyllysine; alternate. Catalysis depends on His-263, which acts as the Proton acceptor. Arg-357 serves as a coordination point for NADP(+). D-glucose 6-phosphate contacts are provided by Lys-360 and Arg-365. The NADP(+) site is built by Lys-366, Arg-370, and Arg-393. Position 395 (Gln-395) interacts with D-glucose 6-phosphate. Residues 401–403 and 421–423 contribute to the NADP(+) site; these read YTK and DLT. Lys-403 carries the N6-acetyllysine modification. At Lys-432 the chain carries N6-acetyllysine. Arg-487 is an NADP(+) binding site. At Lys-497 the chain carries N6-acetyllysine. Tyr-503 and Trp-509 together coordinate NADP(+). Tyr-503 is modified (phosphotyrosine).

The protein belongs to the glucose-6-phosphate dehydrogenase family. In terms of assembly, homotetramer; dimer of dimers. Interacts with SIRT2; the interaction is enhanced by H(2)O(2) treatment. Forms a ternary complex with ALDOB and TP53; this interaction is direct. ALDOB stabilizes the complex inhibiting G6PD activity and keeping oxidative pentose phosphate metabolism in check. In terms of processing, acetylated by ELP3 at Lys-403; acetylation inhibits its homodimerization and enzyme activity. Deacetylated by SIRT2 at Lys-403; deacetylation stimulates its enzyme activity. As to expression, isoform Long is found in lymphoblasts, granulocytes and sperm.

The protein resides in the cytoplasm. The protein localises to the cytosol. It is found in the membrane. The catalysed reaction is D-glucose 6-phosphate + NADP(+) = 6-phospho-D-glucono-1,5-lactone + NADPH + H(+). It functions in the pathway carbohydrate degradation; pentose phosphate pathway; D-ribulose 5-phosphate from D-glucose 6-phosphate (oxidative stage): step 1/3. In terms of biological role, catalyzes the rate-limiting step of the oxidative pentose-phosphate pathway, which represents a route for the dissimilation of carbohydrates besides glycolysis. The main function of this enzyme is to provide reducing power (NADPH) and pentose phosphates for fatty acid and nucleic acid synthesis. This chain is Glucose-6-phosphate 1-dehydrogenase (G6PD), found in Homo sapiens (Human).